A 314-amino-acid chain; its full sequence is Secreted frizzled-related protein 1 (314 aa).

Positions 1 to 31 (MGVGRSARGRGGAASGVLLALAAALLAAGSA) are cleaved as a signal peptide. The 117-residue stretch at 53–169 (TKPPQCVDIP…FPEGDVCIAM (117 aa)) folds into the FZ domain. 5 disulfides stabilise this stretch: Cys-58–Cys-121, Cys-68–Cys-114, Cys-105–Cys-140, Cys-129–Cys-166, and Cys-133–Cys-157. N-linked (GlcNAc...) asparagine glycosylation is present at Asn-173. 3 disulfide bridges follow: Cys-186–Cys-256, Cys-189–Cys-258, and Cys-203–Cys-306. The region spanning 186 to 306 (CPPCDNELKS…FMKRMKNHEC (121 aa)) is the NTR domain.

This sequence belongs to the secreted frizzled-related protein (sFRP) family. Interacts with WNT8, WNT1, WNT2, WNT4 and FRZD6. Interacts with MYOC. As to expression, highly expressed in kidney and embryonic heart. Also highly expressed in the eye, where it is principally localized to the ciliary body and the lens epithelium. Weaker expression in heart, lung and brain. In the brain, is expressed exclusively in the choroid plexus.

The protein localises to the secreted. Soluble frizzled-related proteins (sFRPS) function as modulators of Wnt signaling through direct interaction with Wnts. They have a role in regulating cell growth and differentiation in specific cell types. SFRP1 decreases intracellular beta-catenin levels. Has antiproliferative effects on vascular cells, in vitro and in vivo, and can induce, in vivo, an angiogenic response. In vascular cell cycle, delays the G1 phase and entry into the S phase. In kidney development, inhibits tubule formation and bud growth in metanephroi. Inhibits WNT1/WNT4-mediated TCF-dependent transcription. In Mus musculus (Mouse), this protein is Secreted frizzled-related protein 1.